Here is a 923-residue protein sequence, read N- to C-terminus: Protocadherin gamma-B5 (923 aa).

The first 30 residues, 1-30 (MGSGAGELGRAERLPVLFLFLLSLFCPALC), serve as a signal peptide directing secretion. Cadherin domains follow at residues 31 to 133 (EQIR…TPKF), 134 to 242 (TQNS…PPVF), 243 to 343 (NRDV…SPEV), 344 to 448 (TFHS…APVF), 449 to 558 (HQAS…APRV), and 566 to 671 (DGSA…LPDI). Topologically, residues 31–687 (EQIRYRIPEE…SDPQAELQFY (657 aa)) are extracellular. Residues Asn415 and Asn541 are each glycosylated (N-linked (GlcNAc...) asparagine). A helical membrane pass occupies residues 688–708 (LVVALALISVLFLLAVILAVA). The Cytoplasmic portion of the chain corresponds to 709 to 923 (LRLRRSSSPA…KKKSGKKEKK (215 aa)). Disordered regions lie at residues 794–832 (TSHP…WPNN) and 893–923 (ATLT…KEKK). Positions 807–832 (WRFSQAQRPGTSGSQNGDDTGTWPNN) are enriched in polar residues. Residues 913–923 (NKKKSGKKEKK) are compositionally biased toward basic residues.

The protein localises to the cell membrane. Potential calcium-dependent cell-adhesion protein. May be involved in the establishment and maintenance of specific neuronal connections in the brain. This chain is Protocadherin gamma-B5 (PCDHGB5), found in Homo sapiens (Human).